We begin with the raw amino-acid sequence, 422 residues long: L-threonine dehydratase biosynthetic IlvA (422 aa).

N6-(pyridoxal phosphate)lysine is present on K56. Pyridoxal 5'-phosphate-binding positions include N83, G189–L193, and S315. One can recognise an ACT-like domain in the interval H339 to E413.

The protein belongs to the serine/threonine dehydratase family. As to quaternary structure, homotetramer. Requires pyridoxal 5'-phosphate as cofactor.

It catalyses the reaction L-threonine = 2-oxobutanoate + NH4(+). It participates in amino-acid biosynthesis; L-isoleucine biosynthesis; 2-oxobutanoate from L-threonine: step 1/1. In terms of biological role, catalyzes the anaerobic formation of alpha-ketobutyrate and ammonia from threonine in a two-step reaction. The first step involved a dehydration of threonine and a production of enamine intermediates (aminocrotonate), which tautomerizes to its imine form (iminobutyrate). Both intermediates are unstable and short-lived. The second step is the nonenzymatic hydrolysis of the enamine/imine intermediates to form 2-ketobutyrate and free ammonia. In the low water environment of the cell, the second step is accelerated by RidA. The sequence is that of L-threonine dehydratase biosynthetic IlvA (ilvA) from Staphylococcus aureus (strain bovine RF122 / ET3-1).